The following is a 441-amino-acid chain: Ribulose bisphosphate carboxylase large chain (441 aa).

Lys5 is modified (N6,N6,N6-trimethyllysine). Substrate contacts are provided by Asn114 and Thr164. Lys166 acts as the Proton acceptor in catalysis. Lys168 contributes to the substrate binding site. The Mg(2+) site is built by Lys192, Asp194, and Glu195. N6-carboxylysine is present on Lys192. His285 acts as the Proton acceptor in catalysis. 3 residues coordinate substrate: Arg286, His318, and Ser370.

The protein belongs to the RuBisCO large chain family. Type I subfamily. Heterohexadecamer of 8 large chains and 8 small chains; disulfide-linked. The disulfide link is formed within the large subunit homodimers. Mg(2+) is required as a cofactor. The disulfide bond which can form in the large chain dimeric partners within the hexadecamer appears to be associated with oxidative stress and protein turnover.

The protein localises to the plastid. Its subcellular location is the chloroplast. The enzyme catalyses 2 (2R)-3-phosphoglycerate + 2 H(+) = D-ribulose 1,5-bisphosphate + CO2 + H2O. It catalyses the reaction D-ribulose 1,5-bisphosphate + O2 = 2-phosphoglycolate + (2R)-3-phosphoglycerate + 2 H(+). Functionally, ruBisCO catalyzes two reactions: the carboxylation of D-ribulose 1,5-bisphosphate, the primary event in carbon dioxide fixation, as well as the oxidative fragmentation of the pentose substrate in the photorespiration process. Both reactions occur simultaneously and in competition at the same active site. This chain is Ribulose bisphosphate carboxylase large chain, found in Argyrochosma delicatula (Delicate cloak fern).